Here is a 436-residue protein sequence, read N- to C-terminus: GTPase Der (436 aa).

EngA-type G domains follow at residues 4 to 167 (PIVA…GEEE) and 176 to 351 (IRLS…ENHK). GTP-binding positions include 10–17 (GRPNVGKS), 57–61 (DTGGI), 119–122 (NKVD), 182–189 (GRPNVGKS), 229–233 (DTAGM), and 294–297 (NKWD). One can recognise a KH-like domain in the interval 352 to 436 (KRVQSSTLNE…PIHIIARKRN (85 aa)).

The protein belongs to the TRAFAC class TrmE-Era-EngA-EngB-Septin-like GTPase superfamily. EngA (Der) GTPase family. In terms of assembly, associates with the 50S ribosomal subunit.

Functionally, GTPase that plays an essential role in the late steps of ribosome biogenesis. In Staphylococcus aureus (strain Mu3 / ATCC 700698), this protein is GTPase Der.